The chain runs to 271 residues: Calretinin (271 aa).

EF-hand domains lie at 16 to 51 (LTASQFLEIWKHFDADGNGYIEGKELENFFQELEKA), 63 to 98 (NFGEKMKEFMQKYDKNSDGKIEMAELAQILPTEENF), 107 to 142 (GSSAEFMEAWRKYDTDRSGYIEANELKGFLSDLLKK), 151 to 186 (KLQEYTQTILRMFDLNGDGKLGLSEMSRLLPVQENF), 195 to 230 (LTSEEFNAIFTFYDKDRSGYIDEHELDALLKDLYEK), and 235 to 270 (MNIQQLTNYRKSVMSLAEAGKLYRKDLEIVLCSEPP). The Ca(2+) site is built by Asp-29, Asp-31, Asn-33, Tyr-35, Glu-40, Asp-76, Asn-78, Asp-80, Lys-82, Glu-87, Asp-120, Asp-122, Ser-124, Tyr-126, Glu-131, Asp-164, Asn-166, Asp-168, Lys-170, Glu-175, Asp-208, Asp-210, Ser-212, Tyr-214, and Glu-219. The residue at position 214 (Tyr-214) is a Phosphotyrosine.

The protein belongs to the calbindin family. As to expression, brain.

The protein localises to the synapse. It localises to the cell projection. It is found in the dendrite. In terms of biological role, calcium-binding protein involved in calcium homeostasis and signal transduction. It plays a critical role in buffering intracellular calcium levels and modulating calcium-dependent signaling pathways. Predominantly expressed in specific neuronal populations, influences synaptic plasticity and neuronal excitability, contributing to learning and memory. During embryonic development, it facilitates neuronal differentiation and maturation. This chain is Calretinin, found in Homo sapiens (Human).